Here is a 403-residue protein sequence, read N- to C-terminus: 3-hydroxy-3-methylglutaryl-coenzyme A reductase (403 aa).

Active-site charge relay system residues include E99 and D303. H398 acts as the Proton donor in catalysis.

Belongs to the HMG-CoA reductase family.

The enzyme catalyses (R)-mevalonate + 2 NADP(+) + CoA = (3S)-3-hydroxy-3-methylglutaryl-CoA + 2 NADPH + 2 H(+). Its pathway is metabolic intermediate biosynthesis; (R)-mevalonate biosynthesis; (R)-mevalonate from acetyl-CoA: step 3/3. Is competitively inhibited by (R)-HMG-CoA and lovastatin (formerly called mevinolin). Its function is as follows. Catalyzes the NADPH-dependent reductive deacylation of (S)-3-hydroxy-3-methylglutaryl-CoA (HMG-CoA) to (R)-mevalonate. Functions in the mevalonate (MVA) pathway leading to isopentenyl diphosphate (IPP), a key precursor for the biosynthesis of isoprenoid compounds such as archaeal membrane lipids. Is also able to catalyze the reduction of mevaldehyde to mevalonate and the oxidative acylation of mevaldehyde to HMG-CoA. This chain is 3-hydroxy-3-methylglutaryl-coenzyme A reductase (hmgA), found in Haloferax volcanii (strain ATCC 29605 / DSM 3757 / JCM 8879 / NBRC 14742 / NCIMB 2012 / VKM B-1768 / DS2) (Halobacterium volcanii).